We begin with the raw amino-acid sequence, 286 residues long: 3-hydroxyanthranilate 3,4-dioxygenase (286 aa).

The interval 1-160 (MERRVRVKSW…SEQYRTGKPN (160 aa)) is domain A (catalytic). R43 is an O2 binding site. Residues H47, E53, and H91 each coordinate Fe cation. E53 lines the substrate pocket. Substrate-binding residues include R95 and E105. Residues 161 to 177 (PDQLLKELPFPLNTRSI) form a linker region. Residues 178 to 286 (MKPMSLKAWL…QDPARKKPWW (109 aa)) form a domain B region.

Belongs to the 3-HAO family. In terms of assembly, monomer. The cofactor is Fe(2+).

The protein localises to the cytoplasm. The protein resides in the cytosol. It carries out the reaction 3-hydroxyanthranilate + O2 = (2Z,4Z)-2-amino-3-carboxymuconate 6-semialdehyde. Its pathway is cofactor biosynthesis; NAD(+) biosynthesis; quinolinate from L-kynurenine: step 3/3. Catalyzes the oxidative ring opening of 3-hydroxyanthranilate to 2-amino-3-carboxymuconate semialdehyde, which spontaneously cyclizes to quinolinate. In Mus musculus (Mouse), this protein is 3-hydroxyanthranilate 3,4-dioxygenase (Haao).